The primary structure comprises 792 residues: Vicilin Car i 2.0101 (792 aa).

Residues Met1 to Ala26 form the signal peptide. Disordered regions lie at residues Glu132–Glu153, Arg182–Cys217, Glu240–Tyr272, Glu302–Arg325, and Gln350–Glu394. Composition is skewed to basic and acidic residues over residues Arg182–Asp200 and Pro207–Cys217. Residues Glu302–Asp314 show a composition bias toward basic and acidic residues. Over residues Pro315 to Arg325 the composition is skewed to low complexity. Residues Gln350–Arg375 show a composition bias toward basic and acidic residues. Tyr379 provides a ligand contact to Cu cation. Cupin type-1 domains are found at residues Gln384–Glu537 and Ile582–Glu754. Positions 652, 654, and 698 each coordinate Cu cation. Residues Leu727–Glu754 are a coiled coil.

The protein belongs to the 7S seed storage protein family. In terms of assembly, homotrimer. In terms of tissue distribution, expressed in seed (at protein level). Expressed in seed.

Functionally, seed storage protein. The protein is Vicilin Car i 2.0101 of Carya illinoinensis (Pecan).